The sequence spans 341 residues: Probable alcohol acetyltransferase (341 aa).

The N-terminal 40 residues, 1 to 40, are a transit peptide targeting the mitochondrion; that stretch reads MFASRILRNSAQTLKTELPHKETIKMAYDLHKPRSTAIRH. Positions 48–301 constitute an AB hydrolase-1 domain; that stretch reads PILFLHGIFG…NSNHDILDQR (254 aa). Active-site charge relay system residues include serine 121, aspartate 145, and histidine 295.

The protein belongs to the AB hydrolase superfamily.

The protein localises to the mitochondrion. Probable alcohol acetyltransferase that uses acetyl-CoA to synthesize acetate esters from various alcohols. Not involved in the synthesis of ethyl acetate. This Wickerhamomyces anomalus (strain ATCC 58044 / CBS 1984 / NCYC 433 / NRRL Y-366-8) (Yeast) protein is Probable alcohol acetyltransferase (EAT2).